The chain runs to 1755 residues: Gag-Pro-Pol polyprotein (1755 aa).

Glycine 2 carries the N-myristoyl glycine; by host lipid modification. 2 stretches are compositionally biased toward basic and acidic residues: residues 151–169 and 178–191; these read YDEP…EKDH and QRKE…KEKD. The interval 151-191 is disordered; it reads YDEPYEEKEKADKNEEKDHVRKIKKVVQRKENSEGKRKEKD. The PTAP/PSAP motif signature appears at 305–308; that stretch reads PSAP. 2 CCHC-type zinc fingers span residues 525-542 and 552-569; these read PVCF…DCKD and GLCP…ECKS. The segment at 572–631 is disordered; that stretch reads DKDGNPLPPLETNAENSKNLVKGQSPSPAQKGDGVKGSGLNPEAPPFTIHDLPRGTPGSA. Over residues 584–599 the composition is skewed to polar residues; the sequence is NAENSKNLVKGQSPSP. Residues 766-841 enclose the Peptidase A2 domain; it reads FLGLLDTGAD…LPFTLWGRDI (76 aa). Aspartate 771 functions as the Protease; shared with dimeric partner in the catalytic mechanism. The 189-residue stretch at 905–1093 folds into the Reverse transcriptase domain; the sequence is LQLGHLEESN…DNLKYLGTHI (189 aa). Residues aspartate 970, aspartate 1045, aspartate 1046, aspartate 1316, glutamate 1346, aspartate 1366, and aspartate 1429 each contribute to the Mg(2+) site. One can recognise an RNase H type-1 domain in the interval 1307–1437; that stretch reads LEKGIVIFTD…ADSLTRILTA (131 aa). The Integrase-type zinc-finger motif lies at 1436-1477; sequence TALESAQESHALHHQNAAALRFQFHITREQAREIVKLCPNCP. Positions 1445, 1449, 1473, and 1476 each coordinate Zn(2+). The Integrase catalytic domain occupies 1490–1647; sequence RGLKPRVLWQ…TAAERHWGPI (158 aa). Residues aspartate 1501, aspartate 1558, and glutamate 1594 each contribute to the Mg(2+) site. The segment at residues 1653 to 1702 is a DNA-binding region (integrase-type); that stretch reads PMVMWKDLLTGSWKGPDVLITAGRGYACVFPQDAETPIWVPDRFIRPFTE. The segment at 1699–1755 is disordered; it reads PFTERKEATPTPGTAEKTPPRDEKDQQESPKNESSPHQREDGLATSAGVDLRSGGGP. The segment covering 1716–1740 has biased composition (basic and acidic residues); it reads TPPRDEKDQQESPKNESSPHQREDG.

Belongs to the retroviral Pol polyprotein family. Homodimer; when myristoylated. As to quaternary structure, homodimer. In terms of assembly, homooctamer. Homotrimer. It depends on Mg(2+) as a cofactor. Post-translationally, specific enzymatic cleavages in vivo yield mature proteins. Released by autocatalytic processing. In terms of processing, myristoylated. Myristoylation of the matrix (MA) domain mediates the transport and binding of Gag polyproteins to the host plasma membrane and is required for the assembly of viral particles.

It is found in the virion. It catalyses the reaction DNA(n) + a 2'-deoxyribonucleoside 5'-triphosphate = DNA(n+1) + diphosphate. It carries out the reaction Endonucleolytic cleavage to 5'-phosphomonoester.. The catalysed reaction is dUTP + H2O = dUMP + diphosphate + H(+). Inhibited by pepstatin A. Matrix protein. Its function is as follows. Nucleocapsid protein p14: Binds strongly to viral nucleic acids and promote their aggregation. Also destabilizes the nucleic acids duplexes via highly structured zinc-binding motifs. Functionally, capsid protein. In terms of biological role, NC-dUTPase has dUTPase activity, thereby preventing incorporation of uracil into DNA. The aspartyl protease mediates proteolytic cleavages of Gag and Gag-Pol polyproteins during or shortly after the release of the virion from the plasma membrane. Cleavages take place as an ordered, step-wise cascade to yield mature proteins. This process is called maturation. Displays maximal activity during the budding process just prior to particle release from the cell. Its function is as follows. RT is a multifunctional enzyme that converts the viral dimeric RNA genome into dsDNA in the cytoplasm, shortly after virus entry into the cell. This enzyme displays a DNA polymerase activity that can copy either DNA or RNA templates, and a ribonuclease H (RNase H) activity that cleaves the RNA strand of RNA-DNA heteroduplexes in a partially processive 3' to 5' endonucleasic mode. Conversion of viral genomic RNA into dsDNA requires many steps. A tRNA binds to the primer-binding site (PBS) situated at the 5' end of the viral RNA. RT uses the 3' end of the tRNA primer to perfom a short round of RNA-dependent minus-strand DNA synthesis. The reading proceeds through the U5 region and ends after the repeated (R) region which is present at both ends of viral RNA. The portion of the RNA-DNA heteroduplex is digested by the RNase H, resulting in a ssDNA product attached to the tRNA primer. This ssDNA/tRNA hybridizes with the identical R region situated at the 3' end of viral RNA. This template exchange, known as minus-strand DNA strong stop transfer, can be either intra- or intermolecular. RT uses the 3' end of this newly synthesized short ssDNA to perfom the RNA-dependent minus-strand DNA synthesis of the whole template. RNase H digests the RNA template except for a polypurine tract (PPT) situated at the 5' end of the genome. It is not clear if both polymerase and RNase H activities are simultaneous. RNase H probably can proceed both in a polymerase-dependent (RNA cut into small fragments by the same RT performing DNA synthesis) and a polymerase-independent mode (cleavage of remaining RNA fragments by free RTs). Secondly, RT performs DNA-directed plus-strand DNA synthesis using the PPT that has not been removed by RNase H as primers. PPT and tRNA primers are then removed by RNase H. The 3' and 5' ssDNA PBS regions hybridize to form a circular dsDNA intermediate. Strand displacement synthesis by RT to the PBS and PPT ends produces a blunt ended, linear dsDNA copy of the viral genome that includes long terminal repeats (LTRs) at both ends. Functionally, catalyzes viral DNA integration into the host chromosome, by performing a series of DNA cutting and joining reactions. This is Gag-Pro-Pol polyprotein (gag-pro-pol) from Mus musculus (Mouse).